The sequence spans 847 residues: Protein translocase subunit SecA (847 aa).

ATP is bound by residues Q87, 105 to 109, and D495; that span reads GEGKT. A disordered region spans residues 828–847; the sequence is SSNSPSDARNRPIEHDDNAV. Positions 835-847 are enriched in basic and acidic residues; sequence ARNRPIEHDDNAV.

This sequence belongs to the SecA family. In terms of assembly, monomer and homodimer. Part of the essential Sec protein translocation apparatus which comprises SecA, SecYEG and auxiliary proteins SecDF. Other proteins may also be involved.

Its subcellular location is the cell membrane. It localises to the cytoplasm. It carries out the reaction ATP + H2O + cellular proteinSide 1 = ADP + phosphate + cellular proteinSide 2.. Part of the Sec protein translocase complex. Interacts with the SecYEG preprotein conducting channel. Has a central role in coupling the hydrolysis of ATP to the transfer of proteins into and across the cell membrane, serving as an ATP-driven molecular motor driving the stepwise translocation of polypeptide chains across the membrane. This is Protein translocase subunit SecA from Tropheryma whipplei (strain TW08/27) (Whipple's bacillus).